The primary structure comprises 852 residues: Alanine--tRNA ligase (852 aa).

Positions 554, 558, 656, and 660 each coordinate Zn(2+).

The protein belongs to the class-II aminoacyl-tRNA synthetase family. Zn(2+) is required as a cofactor.

The protein localises to the cytoplasm. It catalyses the reaction tRNA(Ala) + L-alanine + ATP = L-alanyl-tRNA(Ala) + AMP + diphosphate. Its function is as follows. Catalyzes the attachment of alanine to tRNA(Ala) in a two-step reaction: alanine is first activated by ATP to form Ala-AMP and then transferred to the acceptor end of tRNA(Ala). Also edits incorrectly charged Ser-tRNA(Ala) and Gly-tRNA(Ala) via its editing domain. This chain is Alanine--tRNA ligase, found in Campylobacter curvus (strain 525.92).